The following is a 118-amino-acid chain: Large ribosomal subunit protein bL19 (118 aa).

This sequence belongs to the bacterial ribosomal protein bL19 family.

In terms of biological role, this protein is located at the 30S-50S ribosomal subunit interface and may play a role in the structure and function of the aminoacyl-tRNA binding site. This is Large ribosomal subunit protein bL19 from Helicobacter pylori (strain G27).